A 687-amino-acid polypeptide reads, in one-letter code: Polyphosphate kinase (687 aa).

Position 45 (Asn45) interacts with ATP. Positions 375 and 405 each coordinate Mg(2+). His435 functions as the Phosphohistidine intermediate in the catalytic mechanism. The ATP site is built by Tyr472, Arg568, and His596.

It belongs to the polyphosphate kinase 1 (PPK1) family. Mg(2+) serves as cofactor. Post-translationally, an intermediate of this reaction is the autophosphorylated ppk in which a phosphate is covalently linked to a histidine residue through a N-P bond.

It carries out the reaction [phosphate](n) + ATP = [phosphate](n+1) + ADP. Functionally, catalyzes the reversible transfer of the terminal phosphate of ATP to form a long-chain polyphosphate (polyP). The sequence is that of Polyphosphate kinase from Burkholderia vietnamiensis (strain G4 / LMG 22486) (Burkholderia cepacia (strain R1808)).